Consider the following 898-residue polypeptide: Metalloprotease StcE (898 aa).

An N-terminal signal peptide occupies residues 1–35 (MNTKMNERWRTPMKLKYLSCTILAPLAIGVFSATA). Positions 296–551 (ELLLHTIDIG…QRFFENKAVF (256 aa)) constitute a Peptidase M66 domain. H446 contributes to the Zn(2+) binding site. The active site involves E447. 2 residues coordinate Zn(2+): H450 and H456.

Zn(2+) is required as a cofactor.

Its subcellular location is the secreted. With respect to regulation, inhibited by divalent cation chelators such as BPS and EDTA. In terms of biological role, virulence factor that contributes to intimate adherence of enterohemorrhagic E.coli (EHEC) O157:H7 to host cells. Is able to cleave the secreted human mucin 7 (MUC7) and the glycoprotein 340 (DMBT1/GP340). Also cleaves human C1 inhibitor (SERPING1), a regulator of multiple inflammatory pathways, and binds and localizes it to bacterial and host cell surfaces, protecting them from complement-mediated lysis. Therefore, the current model proposes two roles for StcE during infection: it acts first as a mucinase, allowing passage of EHEC through the oral cavity by cleaving the salivary glycoproteins that are responsible for bacterial aggregation. Similarly, in the colon, StcE cleaves the glycoproteins that protect the intestinal epithelial surface, allowing EHEC to come into close contact with host cell membranes. Secondly, it acts as an anti-inflammatory agent by localizing SERPING1 to cell membranes. This is Metalloprotease StcE (stcE) from Escherichia coli O157:H7.